The following is a 274-amino-acid chain: 4-hydroxy-tetrahydrodipicolinate reductase (274 aa).

12–17 (GAAGRM) lines the NAD(+) pocket. R39 contacts NADP(+). NAD(+)-binding positions include 102–104 (GTT) and 126–129 (SGNM). H160 (proton donor/acceptor) is an active-site residue. Residue H161 coordinates (S)-2,3,4,5-tetrahydrodipicolinate. K164 (proton donor) is an active-site residue. 170 to 171 (GT) lines the (S)-2,3,4,5-tetrahydrodipicolinate pocket.

This sequence belongs to the DapB family.

Its subcellular location is the cytoplasm. The catalysed reaction is (S)-2,3,4,5-tetrahydrodipicolinate + NAD(+) + H2O = (2S,4S)-4-hydroxy-2,3,4,5-tetrahydrodipicolinate + NADH + H(+). The enzyme catalyses (S)-2,3,4,5-tetrahydrodipicolinate + NADP(+) + H2O = (2S,4S)-4-hydroxy-2,3,4,5-tetrahydrodipicolinate + NADPH + H(+). Its pathway is amino-acid biosynthesis; L-lysine biosynthesis via DAP pathway; (S)-tetrahydrodipicolinate from L-aspartate: step 4/4. Catalyzes the conversion of 4-hydroxy-tetrahydrodipicolinate (HTPA) to tetrahydrodipicolinate. This chain is 4-hydroxy-tetrahydrodipicolinate reductase, found in Rhizobium rhizogenes (strain K84 / ATCC BAA-868) (Agrobacterium radiobacter).